The primary structure comprises 298 residues: Protoheme IX farnesyltransferase (298 aa).

The next 9 membrane-spanning stretches (helical) occupy residues 23–43, 47–67, 93–113, 115–135, 143–163, 169–189, 211–231, 236–256, and 278–298; these read LLLL…GKPY, LVVL…NMYF, VFIA…RIIN, HFAL…TYLL, IIAG…AAAG, ALLF…FLAT, IAVA…IVGL, VIGT…FHLA, and MMLG…YIIS.

This sequence belongs to the UbiA prenyltransferase family. Protoheme IX farnesyltransferase subfamily.

It is found in the cell membrane. The enzyme catalyses heme b + (2E,6E)-farnesyl diphosphate + H2O = Fe(II)-heme o + diphosphate. It functions in the pathway porphyrin-containing compound metabolism; heme O biosynthesis; heme O from protoheme: step 1/1. In terms of biological role, converts heme B (protoheme IX) to heme O by substitution of the vinyl group on carbon 2 of heme B porphyrin ring with a hydroxyethyl farnesyl side group. This Hyperthermus butylicus (strain DSM 5456 / JCM 9403 / PLM1-5) protein is Protoheme IX farnesyltransferase.